The following is a 507-amino-acid chain: Maturase K (507 aa).

The protein belongs to the intron maturase 2 family. MatK subfamily.

The protein localises to the plastid. Its subcellular location is the chloroplast. In terms of biological role, usually encoded in the trnK tRNA gene intron. Probably assists in splicing its own and other chloroplast group II introns. The chain is Maturase K from Persea americana (Avocado).